The primary structure comprises 70 residues: Protein SlyX homolog (70 aa).

Belongs to the SlyX family.

The sequence is that of Protein SlyX homolog from Agrobacterium fabrum (strain C58 / ATCC 33970) (Agrobacterium tumefaciens (strain C58)).